The primary structure comprises 223 residues: Cytidylate kinase (223 aa).

Residue 10 to 18 (GPAGSGKSS) coordinates ATP.

This sequence belongs to the cytidylate kinase family. Type 1 subfamily.

The protein localises to the cytoplasm. The catalysed reaction is CMP + ATP = CDP + ADP. It carries out the reaction dCMP + ATP = dCDP + ADP. The protein is Cytidylate kinase of Pseudothermotoga lettingae (strain ATCC BAA-301 / DSM 14385 / NBRC 107922 / TMO) (Thermotoga lettingae).